Reading from the N-terminus, the 342-residue chain is UDP-3-O-acylglucosamine N-acyltransferase (342 aa).

Histidine 234 acts as the Proton acceptor in catalysis.

It belongs to the transferase hexapeptide repeat family. LpxD subfamily. Homotrimer.

The enzyme catalyses a UDP-3-O-[(3R)-3-hydroxyacyl]-alpha-D-glucosamine + a (3R)-hydroxyacyl-[ACP] = a UDP-2-N,3-O-bis[(3R)-3-hydroxyacyl]-alpha-D-glucosamine + holo-[ACP] + H(+). It functions in the pathway bacterial outer membrane biogenesis; LPS lipid A biosynthesis. Functionally, catalyzes the N-acylation of UDP-3-O-acylglucosamine using 3-hydroxyacyl-ACP as the acyl donor. Is involved in the biosynthesis of lipid A, a phosphorylated glycolipid that anchors the lipopolysaccharide to the outer membrane of the cell. This chain is UDP-3-O-acylglucosamine N-acyltransferase, found in Oleidesulfovibrio alaskensis (strain ATCC BAA-1058 / DSM 17464 / G20) (Desulfovibrio alaskensis).